Consider the following 545-residue polypeptide: Glucose-6-phosphate isomerase (545 aa).

Catalysis depends on Glu-351, which acts as the Proton donor. Active-site residues include His-382 and Lys-510.

This sequence belongs to the GPI family.

It localises to the cytoplasm. It carries out the reaction alpha-D-glucose 6-phosphate = beta-D-fructose 6-phosphate. Its pathway is carbohydrate biosynthesis; gluconeogenesis. It functions in the pathway carbohydrate degradation; glycolysis; D-glyceraldehyde 3-phosphate and glycerone phosphate from D-glucose: step 2/4. Its function is as follows. Catalyzes the reversible isomerization of glucose-6-phosphate to fructose-6-phosphate. This chain is Glucose-6-phosphate isomerase, found in Helicobacter pylori (strain Shi470).